The sequence spans 351 residues: Sulfate/thiosulfate import ATP-binding protein CysA (351 aa).

An ABC transporter domain is found at I3–L237. G35–T42 is an ATP binding site.

The protein belongs to the ABC transporter superfamily. Sulfate/tungstate importer (TC 3.A.1.6) family. As to quaternary structure, the complex is composed of two ATP-binding proteins (CysA), two transmembrane proteins (CysT and CysW) and a solute-binding protein (CysP).

It localises to the cell inner membrane. It catalyses the reaction sulfate(out) + ATP + H2O = sulfate(in) + ADP + phosphate + H(+). The catalysed reaction is thiosulfate(out) + ATP + H2O = thiosulfate(in) + ADP + phosphate + H(+). In terms of biological role, part of the ABC transporter complex CysAWTP involved in sulfate/thiosulfate import. Responsible for energy coupling to the transport system. The protein is Sulfate/thiosulfate import ATP-binding protein CysA of Burkholderia mallei (strain ATCC 23344).